The following is a 350-amino-acid chain: Histidinol-phosphate aminotransferase (350 aa).

An N6-(pyridoxal phosphate)lysine modification is found at K220.

Belongs to the class-II pyridoxal-phosphate-dependent aminotransferase family. Histidinol-phosphate aminotransferase subfamily. In terms of assembly, homodimer. Requires pyridoxal 5'-phosphate as cofactor.

The catalysed reaction is L-histidinol phosphate + 2-oxoglutarate = 3-(imidazol-4-yl)-2-oxopropyl phosphate + L-glutamate. It participates in amino-acid biosynthesis; L-histidine biosynthesis; L-histidine from 5-phospho-alpha-D-ribose 1-diphosphate: step 7/9. The polypeptide is Histidinol-phosphate aminotransferase (Macrococcus caseolyticus (strain JCSC5402) (Macrococcoides caseolyticum)).